Here is a 200-residue protein sequence, read N- to C-terminus: Small ribosomal subunit protein uS5 (200 aa).

Polar residues predominate over residues 1–12 (MGRPRTSQTRGQ). The disordered stretch occupies residues 1-49 (MGRPRTSQTRGQGPSGATGGNPRGGGSTTRERDARGARPGERDGGSEIQ). The segment covering 13-27 (GPSGATGGNPRGGGS) has biased composition (gly residues). Positions 29–49 (TRERDARGARPGERDGGSEIQ) are enriched in basic and acidic residues. An S5 DRBM domain is found at 48 to 111 (IQDRVVQIRR…EKARHAMFDV (64 aa)).

It belongs to the universal ribosomal protein uS5 family. In terms of assembly, part of the 30S ribosomal subunit. Contacts proteins S4 and S8.

In terms of biological role, with S4 and S12 plays an important role in translational accuracy. Functionally, located at the back of the 30S subunit body where it stabilizes the conformation of the head with respect to the body. The protein is Small ribosomal subunit protein uS5 of Rubrobacter xylanophilus (strain DSM 9941 / JCM 11954 / NBRC 16129 / PRD-1).